The primary structure comprises 728 residues: FYN-binding protein 2 (728 aa).

Disordered regions lie at residues 17–76, 250–287, and 367–390; these read QNLD…PLQP, QAPEKQPDVRHHHLPKTKPLPSIDSLGPPPPKPSRPPI, and PGKNFPYPEPSAKHEDKKMKEKQP. Positions 42 to 75 are enriched in polar residues; that stretch reads GTQSTQILANGKPLSSNHKQRTPYCSSSESQPLQ. Residues 276–285 are compositionally biased toward pro residues; that stretch reads GPPPPKPSRP. Basic and acidic residues predominate over residues 377 to 390; the sequence is SAKHEDKKMKEKQP. Phosphotyrosine is present on tyrosine 491. Residues 521-524 carry the SH2-binding; to LCP2 motif; sequence YEDV. Position 587 is a phosphotyrosine (tyrosine 587). An SH3 domain is found at 664–724; that stretch reads IVINTAVACS…LIEHLDFKHQ (61 aa).

As to quaternary structure, interacts with SKAP1, LCK and FYN. The phosphorylated form interacts with LCP2. Post-translationally, phosphorylation is required for its function in T-cell activation. In terms of tissue distribution, expressed in T-cells (at protein level). Widely expressed.

It is found in the membrane raft. Adapter protein that plays a role in T-cell receptor (TCR)-mediated activation of signaling pathways. Required for T-cell activation and integrin-mediated T-cell adhesion in response to TCR stimulation. The sequence is that of FYN-binding protein 2 from Homo sapiens (Human).